Consider the following 759-residue polypeptide: Pseudocleavage protein nop-1 (759 aa).

Disordered stretches follow at residues methionine 1–phenylalanine 46, lysine 334–lysine 361, leucine 379–glutamine 413, glutamine 440–arginine 495, and glutamate 732–isoleucine 759. Over residues aspartate 10 to arginine 42 the composition is skewed to basic and acidic residues. Positions threonine 448 to serine 465 are enriched in low complexity. Over residues glycine 473–arginine 482 the composition is skewed to polar residues. The span at serine 485–arginine 495 shows a compositional bias: basic and acidic residues. The segment covering proline 736–isoleucine 759 has biased composition (polar residues).

It localises to the nucleus. Its subcellular location is the cytoplasm. It is found in the cell cortex. The protein localises to the cleavage furrow. Required for formation of the pseudocleavage furrow during the first cleavage of the embryo and also mediates aster-induced furrowing during cytokinesis. Promotes cortical recruitment of ani-1 and nmy-2 during pseudocleavage and cytokinesis and promotes the accumulation of actin at furrowing regions. Regulates establishment of embryonic cell polarity. The polypeptide is Pseudocleavage protein nop-1 (nop-1) (Caenorhabditis elegans).